Consider the following 311-residue polypeptide: 4-hydroxy-tetrahydrodipicolinate synthase (311 aa).

Thr-49 is a binding site for pyruvate. The active-site Proton donor/acceptor is the Tyr-138. The active-site Schiff-base intermediate with substrate is the Lys-166. Pyruvate is bound at residue Ile-207.

The protein belongs to the DapA family. In terms of assembly, homotetramer; dimer of dimers.

It localises to the cytoplasm. It carries out the reaction L-aspartate 4-semialdehyde + pyruvate = (2S,4S)-4-hydroxy-2,3,4,5-tetrahydrodipicolinate + H2O + H(+). It functions in the pathway amino-acid biosynthesis; L-lysine biosynthesis via DAP pathway; (S)-tetrahydrodipicolinate from L-aspartate: step 3/4. Its function is as follows. Catalyzes the condensation of (S)-aspartate-beta-semialdehyde [(S)-ASA] and pyruvate to 4-hydroxy-tetrahydrodipicolinate (HTPA). This chain is 4-hydroxy-tetrahydrodipicolinate synthase, found in Limosilactobacillus fermentum (strain NBRC 3956 / LMG 18251) (Lactobacillus fermentum).